The sequence spans 314 residues: MKRRRRWRGWLLFPALCFCLLCEAVETNATTVTSTTAAAATTNTTVATTGTTTTSPNVTSTTSNTVTTPTTVSSVSNLTSSTTSIPISTSTVSGTRNTGNNNTTTIGTNATSPSPSVSILTTVTPAATSTISVDGVVTASDYTPTFDDLENITTTRAPTRPPAQDLCSHNLSIILYEEESQSSVDIAVDEEEPELEDDDEYDELWFPLYFEAECNRNYTLHVNHSCDYSVRQSSVSFPPWRDIDSVTFVPRNLSNCSAHGLAVIVAGNQTWYVNPFSLAHLLDAIYNVLGIEDLSANFRRQLAPYRHTLIVPQT.

An N-terminal signal peptide occupies residues 1–24; that stretch reads MKRRRRWRGWLLFPALCFCLLCEA. N-linked (GlcNAc...) asparagine; by host glycosylation is found at Asn-28, Asn-43, Asn-57, Asn-77, Asn-101, Asn-102, Asn-109, Asn-151, Asn-170, Asn-217, Asn-223, Asn-252, Asn-255, and Asn-268. Residues 47–114 are compositionally biased toward low complexity; that stretch reads ATTGTTTTSP…TIGTNATSPS (68 aa). The disordered stretch occupies residues 47–116; it reads ATTGTTTTSP…GTNATSPSPS (70 aa).

It belongs to the HHV-5 UL116 protein family. Interacts with gH. Interacts with UL148. Highly glycosylated.

Its subcellular location is the virion. The protein localises to the host endoplasmic reticulum. In terms of biological role, chaperone protein that cooperates with UL148 to regulate the abundance of gH complexes in virion. First interactor of gH in the host endoplasmic reticulum, regulates the early folding steps of virion assembly. Then, UL148 is recruited and favors the binding of gL. This is an uncharacterized protein from Homo sapiens (Human).